A 674-amino-acid polypeptide reads, in one-letter code: MDMETSWRFLRSVCLLSFILGSFSVYQTLCLVDAQEDAIVTLQVDASNVTRRPIPETLFGIFFEEINHAGAGGLWAELVSNRGFEAGGQIIPSNIWPWSIIGDESSIYVVTDRSSCFERNKIALRMEVLCDSNSCPLGGVGVYNPGYWGMNIEEGKKYKVVLYVRSTGDIDVSVSFTSSNGSVTLASENIIALASDLLNWTKKEMLLEANGTDNGARLQFTTTKKGSIWFDQVSAMPMDTYKGHGFRNDLFQMMVDLKPRFIRFPGGCFVEGDWLGNAFRWKETVRAWEERPGHYGDVWKYWTDDGLGHFEFFQLAEDLGASPIWVFNNGISHNDQVETKNVMPFVQEAIDGIEFARGDSNSTWGSVRAAMGHPEPFELKYVAVGNEDCFKSYYRGNYLEFYNAIKKAYPDIKIISNCDASAKPLDHPADYFDYHIYTLARDLFSKSHDFDNTPRNGPKAFVSEYAVNKADAKNGNLLAALGEAAFLLGLEKNSDIVEMVSYAPLFVNTNDRRWIPDAIVFNSSHLYGTPSYWVQHFFTESSGATLLNSTLKGKTSSVEASAISFQTNGKDYIQIKAVNFGEQSVNLKVAVTGLMAKFYGSKKKVLTSASVMDENSFSNPNMIVPQESLLEMTEQEDLMFVLPPHSFSSFDLLTESENVIKMPISDSYKKTSTM.

Positions 1-24 (MDMETSWRFLRSVCLLSFILGSFS) are cleaved as a signal peptide. N-linked (GlcNAc...) asparagine glycosylation is found at Asn48, Asn180, Asn199, Asn210, Asn361, Asn522, and Asn548.

It belongs to the glycosyl hydrolase 51 family. In terms of tissue distribution, high expression in flowers, siliques and stems. Observed in the vasculature of older root tissue, at the tip of anthers and in the petal blade of fully developed flowers, in floral abscission zones and in silique replum tissue. Expressed in the cambium and phloem, but not in the xylem or in the vascular system of floral tissues.

It is found in the secreted. Its subcellular location is the extracellular space. The protein resides in the extracellular matrix. It carries out the reaction Hydrolysis of terminal non-reducing alpha-L-arabinofuranoside residues in alpha-L-arabinosides.. Its function is as follows. May be involved in the coordinated dissolution of the cell wall matrix during abscission and in the secondary cell wall formation in xylem vessels. The sequence is that of Alpha-L-arabinofuranosidase 2 (ASD2) from Arabidopsis thaliana (Mouse-ear cress).